We begin with the raw amino-acid sequence, 243 residues long: Putative glycerophosphodiester phosphodiesterase YhdW (243 aa).

One can recognise a GP-PDE domain in the interval 1-238 (MYIIAHRGAS…DYPDFIIKDG (238 aa)). The active-site Proton acceptor is the His6. Ca(2+) contacts are provided by Glu33 and Asp35. Residue His48 is the Proton donor of the active site. Ca(2+) is bound at residue Glu107.

The protein belongs to the glycerophosphoryl diester phosphodiesterase family. Ca(2+) is required as a cofactor.

The catalysed reaction is a sn-glycero-3-phosphodiester + H2O = an alcohol + sn-glycerol 3-phosphate + H(+). Glycerophosphodiester phosphodiesterase hydrolyzes glycerophosphodiesters into glycerol-3-phosphate (G3P) and the corresponding alcohol. The chain is Putative glycerophosphodiester phosphodiesterase YhdW (yhdW) from Bacillus subtilis (strain 168).